Reading from the N-terminus, the 507-residue chain is 25-hydroxyvitamin D-1 alpha hydroxylase, mitochondrial (507 aa).

Cys454 is a heme binding site.

Belongs to the cytochrome P450 family. Heme is required as a cofactor. As to expression, kidney.

The protein resides in the mitochondrion membrane. The enzyme catalyses calcidiol + 2 reduced [adrenodoxin] + O2 + 2 H(+) = calcitriol + 2 oxidized [adrenodoxin] + H2O. It carries out the reaction secalciferol + 2 reduced [adrenodoxin] + O2 + 2 H(+) = calcitetrol + 2 oxidized [adrenodoxin] + H2O. The catalysed reaction is 25-hydroxy-24-oxocalciol + 2 reduced [adrenodoxin] + O2 + 2 H(+) = (1S)-1,25-dihydroxy-24-oxocalciol + 2 oxidized [adrenodoxin] + H2O. It catalyses the reaction 25-hydroxyvitamin D2 + 2 reduced [adrenodoxin] + O2 + 2 H(+) = 1alpha,25-dihydroxyvitamin D2 + 2 oxidized [adrenodoxin] + H2O. It functions in the pathway hormone biosynthesis; vitamin D biosynthesis. With respect to regulation, activated by cardiolipin and dioleoyl phosphatidylethanolamine (DOPE), phospholipids found in the inner mitochondrial membrane. Inhibited by high substrate concentration. A cytochrome P450 monooxygenase involved in vitamin D metabolism and in calcium and phosphorus homeostasis. Catalyzes the rate-limiting step in the activation of vitamin D in the kidney, namely the hydroxylation of 25-hydroxyvitamin D3/calcidiol at the C1-alpha position to form the hormonally active form of vitamin D3, 1alpha,25-dihydroxyvitamin D3/calcitriol that acts via the vitamin D receptor (VDR). Has 1-alpha-hydroxylase activity on vitamin D intermediates of the CYP24A1-mediated inactivation pathway. Converts 24R,25-dihydroxyvitamin D3/secalciferol to 1-alpha,24,25-trihydroxyvitamin D3, an active ligand of VDR. Also active on 25-hydroxyvitamin D2. Mechanistically, uses molecular oxygen inserting one oxygen atom into a substrate, and reducing the second into a water molecule, with two electrons provided by NADPH via FDXR/adrenodoxin reductase and FDX1/adrenodoxin. This chain is 25-hydroxyvitamin D-1 alpha hydroxylase, mitochondrial (Cyp27b1), found in Mus musculus (Mouse).